The primary structure comprises 229 residues: Growth factor receptor-bound protein 2 (229 aa).

SH3 domains follow at residues M1–H58 and Q168–R227. The SH2 domain maps to W60–T171.

It is found in the nucleus. The protein resides in the cytoplasm. It localises to the endosome. Its subcellular location is the golgi apparatus. In terms of biological role, adapter protein that provides a critical link between cell surface growth factor receptors and the Ras signaling pathway. Promotes meiotic reinitiation during oocyte maturation. The chain is Growth factor receptor-bound protein 2 from Xenopus tropicalis (Western clawed frog).